A 968-amino-acid chain; its full sequence is RNA polymerase-associated protein RapA (968 aa).

The region spanning E163–D332 is the Helicase ATP-binding domain. D176–T183 is a binding site for ATP. The short motif at D278–H281 is the DEAH box element. Residues R491–H641 enclose the Helicase C-terminal domain.

This sequence belongs to the SNF2/RAD54 helicase family. RapA subfamily. Interacts with the RNAP. Has a higher affinity for the core RNAP than for the holoenzyme. Its ATPase activity is stimulated by binding to RNAP.

In terms of biological role, transcription regulator that activates transcription by stimulating RNA polymerase (RNAP) recycling in case of stress conditions such as supercoiled DNA or high salt concentrations. Probably acts by releasing the RNAP, when it is trapped or immobilized on tightly supercoiled DNA. Does not activate transcription on linear DNA. Probably not involved in DNA repair. This chain is RNA polymerase-associated protein RapA, found in Shewanella denitrificans (strain OS217 / ATCC BAA-1090 / DSM 15013).